A 64-amino-acid polypeptide reads, in one-letter code: DNA gyrase inhibitor YacG (64 aa).

4 residues coordinate Zn(2+): Cys9, Cys12, Cys28, and Cys32. The tract at residues 45 to 64 is disordered; sequence KRIPSAGDLSDSDDWSEQQP. A compositionally biased stretch (acidic residues) spans 54–64; sequence SDSDDWSEQQP.

Belongs to the DNA gyrase inhibitor YacG family. In terms of assembly, interacts with GyrB. The cofactor is Zn(2+).

In terms of biological role, inhibits all the catalytic activities of DNA gyrase by preventing its interaction with DNA. Acts by binding directly to the C-terminal domain of GyrB, which probably disrupts DNA binding by the gyrase. The chain is DNA gyrase inhibitor YacG from Klebsiella pneumoniae subsp. pneumoniae (strain ATCC 700721 / MGH 78578).